We begin with the raw amino-acid sequence, 336 residues long: Fructose-1,6-bisphosphatase class 1 (336 aa).

Residues Glu-90, Asp-112, Leu-114, and Asp-115 each coordinate Mg(2+). Residues 115–118 (DGSS), Asn-207, and Lys-273 contribute to the substrate site. Glu-279 lines the Mg(2+) pocket.

The protein belongs to the FBPase class 1 family. As to quaternary structure, homotetramer. Requires Mg(2+) as cofactor.

It is found in the cytoplasm. It catalyses the reaction beta-D-fructose 1,6-bisphosphate + H2O = beta-D-fructose 6-phosphate + phosphate. The protein operates within carbohydrate biosynthesis; gluconeogenesis. The chain is Fructose-1,6-bisphosphatase class 1 from Xanthomonas oryzae pv. oryzae (strain PXO99A).